We begin with the raw amino-acid sequence, 321 residues long: Serpentine receptor class delta-63 (321 aa).

The next 7 helical transmembrane spans lie at Leu-14–Thr-34, Val-41–Ala-61, Tyr-83–Val-103, Leu-128–Ile-148, Ala-190–Trp-208, Asn-240–Ile-260, and Thr-273–Ile-293.

It belongs to the nematode receptor-like protein srd family.

The protein localises to the membrane. The protein is Serpentine receptor class delta-63 (srd-63) of Caenorhabditis elegans.